The sequence spans 419 residues: Putative competence-damage inducible protein (419 aa).

This sequence belongs to the CinA family.

The protein is Putative competence-damage inducible protein of Streptococcus agalactiae serotype Ia (strain ATCC 27591 / A909 / CDC SS700).